The sequence spans 593 residues: UvrABC system protein C (593 aa).

Residues 13-91 (TTPGVYMMKD…IKEYRPKYNV (79 aa)) form the GIY-YIG domain. In terms of domain architecture, UVR spans 202-237 (DEIVEELKKKMFEYADNLMFEKAQEIKNKITSLEQI).

This sequence belongs to the UvrC family. Interacts with UvrB in an incision complex.

It is found in the cytoplasm. In terms of biological role, the UvrABC repair system catalyzes the recognition and processing of DNA lesions. UvrC both incises the 5' and 3' sides of the lesion. The N-terminal half is responsible for the 3' incision and the C-terminal half is responsible for the 5' incision. The sequence is that of UvrABC system protein C from Caldicellulosiruptor saccharolyticus (strain ATCC 43494 / DSM 8903 / Tp8T 6331).